The following is a 216-amino-acid chain: Ribosomal RNA small subunit methyltransferase G (216 aa).

S-adenosyl-L-methionine contacts are provided by residues Gly-73, Leu-78, 124–125 (AE), and Arg-139.

This sequence belongs to the methyltransferase superfamily. RNA methyltransferase RsmG family.

It localises to the cytoplasm. In terms of biological role, specifically methylates the N7 position of guanine in position 518 of 16S rRNA. The protein is Ribosomal RNA small subunit methyltransferase G of Arthrobacter sp. (strain FB24).